Here is a 313-residue protein sequence, read N- to C-terminus: Methionyl-tRNA formyltransferase (313 aa).

113–116 (SLLP) is a (6S)-5,6,7,8-tetrahydrofolate binding site.

Belongs to the Fmt family.

The enzyme catalyses L-methionyl-tRNA(fMet) + (6R)-10-formyltetrahydrofolate = N-formyl-L-methionyl-tRNA(fMet) + (6S)-5,6,7,8-tetrahydrofolate + H(+). Functionally, attaches a formyl group to the free amino group of methionyl-tRNA(fMet). The formyl group appears to play a dual role in the initiator identity of N-formylmethionyl-tRNA by promoting its recognition by IF2 and preventing the misappropriation of this tRNA by the elongation apparatus. The sequence is that of Methionyl-tRNA formyltransferase from Francisella tularensis subsp. tularensis (strain FSC 198).